The following is a 348-amino-acid chain: MSKQTLVLLYGGRSAEREVSVLSAESVMRAVNYDKFLVKTYFITQMGQFIRTQQFSEKPSESERLMTNETIELTQKIKPSDIYEEGAVVFPVLHGPMGEDGSIQGFLEVLRMPYIGTNVMSSSIAMDKITTKRVLESIGIPQVAYTVYIDGQDLEACLVETLARLTFPIFVKPANMGSSVGISKAQTKVELRKAIQLALTYDSRVLIEQGVVAREIEVGLLGNDKVKSTLPGEVIKDVDFYDYQAKYVDNKITMAIPADVDQSIVTEMRSYAEVAFKALGGCGLSRCDFFLTQDGQVYLNELNTMPGFTQWSMYPLLWENMGLAYPDLIEELVTLAQEMFDQRESHLI.

Residues 132–334 (KRVLESIGIP…YPDLIEELVT (203 aa)) form the ATP-grasp domain. 162 to 217 (LARLTFPIFVKPANMGSSVGISKAQTKVELRKAIQLALTYDSRVLIEQGVVAREIE) serves as a coordination point for ATP. Mg(2+) contacts are provided by D288, E301, and N303.

Belongs to the D-alanine--D-alanine ligase family. Requires Mg(2+) as cofactor. The cofactor is Mn(2+).

The protein localises to the cytoplasm. The catalysed reaction is 2 D-alanine + ATP = D-alanyl-D-alanine + ADP + phosphate + H(+). Its pathway is cell wall biogenesis; peptidoglycan biosynthesis. Cell wall formation. This is D-alanine--D-alanine ligase from Streptococcus pyogenes serotype M18 (strain MGAS8232).